The sequence spans 168 residues: Small ribosomal subunit protein bS16 (168 aa).

The tract at residues 110 to 168 (LAEAEGGPSNEATQPKKKKAPAKKAASDIEATADPAGNADKSEPAAEGEDATVAGATEG) is disordered.

It belongs to the bacterial ribosomal protein bS16 family.

The protein is Small ribosomal subunit protein bS16 of Mycobacterium sp. (strain JLS).